The sequence spans 745 residues: AP-3 complex subunit beta (745 aa).

The residue at position 638 (S638) is a Phosphoserine. Residues 674–745 (YASETSESSE…TEPEPNYWQS (72 aa)) are disordered. The segment covering 680–718 (ESSEGEYETSTSESEDEETDDTSQEEDNEKNSTPDEDTE) has biased composition (acidic residues).

It belongs to the adaptor complexes large subunit family. Adaptor protein complex 3 (AP-3) is a heterotetramer composed of 2 large adaptins (apl5 and apl6), a medium adaptin (apm3) and a small adaptin (aps3).

It is found in the golgi apparatus. The protein localises to the cytoplasmic vesicle. The protein resides in the clathrin-coated vesicle membrane. In terms of biological role, adaptins are components of the adaptor complexes which link clathrin to receptors in coated vesicles. Clathrin-associated protein complexes are believed to interact with the cytoplasmic tails of membrane proteins, leading to their selection and concentration. Beta adaptin is a subunit of the plasma membrane adaptor. The polypeptide is AP-3 complex subunit beta (apl6) (Schizosaccharomyces pombe (strain 972 / ATCC 24843) (Fission yeast)).